Here is a 352-residue protein sequence, read N- to C-terminus: S-adenosylmethionine:tRNA ribosyltransferase-isomerase (352 aa).

This sequence belongs to the QueA family. As to quaternary structure, monomer.

The protein localises to the cytoplasm. The enzyme catalyses 7-aminomethyl-7-carbaguanosine(34) in tRNA + S-adenosyl-L-methionine = epoxyqueuosine(34) in tRNA + adenine + L-methionine + 2 H(+). The protein operates within tRNA modification; tRNA-queuosine biosynthesis. Its function is as follows. Transfers and isomerizes the ribose moiety from AdoMet to the 7-aminomethyl group of 7-deazaguanine (preQ1-tRNA) to give epoxyqueuosine (oQ-tRNA). The chain is S-adenosylmethionine:tRNA ribosyltransferase-isomerase from Cupriavidus necator (strain ATCC 17699 / DSM 428 / KCTC 22496 / NCIMB 10442 / H16 / Stanier 337) (Ralstonia eutropha).